We begin with the raw amino-acid sequence, 329 residues long: Cathepsin K (329 aa).

The N-terminal stretch at 1-15 is a signal peptide; it reads MWGLTVLLLPVVSFA. A propeptide spans 16 to 114 (activation peptide); it reads LYPEEILDTQ…TLYIPDWEGR (99 aa). N-linked (GlcNAc...) asparagine glycosylation occurs at N103. 3 disulfide bridges follow: C136/C177, C170/C210, and C269/C318. C139 is a catalytic residue. Active-site residues include H276 and N296.

Belongs to the peptidase C1 family.

Its subcellular location is the lysosome. The protein localises to the secreted. It is found in the apical cell membrane. The enzyme catalyses Broad proteolytic activity. With small-molecule substrates and inhibitors, the major determinant of specificity is P2, which is preferably Leu, Met &gt; Phe, and not Arg.. Its function is as follows. Thiol protease involved in osteoclastic bone resorption and may participate partially in the disorder of bone remodeling. Displays potent endoprotease activity against fibrinogen at acid pH. May play an important role in extracellular matrix degradation. Involved in the release of thyroid hormone thyroxine (T4) by limited proteolysis of TG/thyroglobulin in the thyroid follicle lumen. The chain is Cathepsin K (CTSK) from Bos taurus (Bovine).